The following is a 557-amino-acid chain: Formate--tetrahydrofolate ligase (557 aa).

65-72 (TPAGEGKT) is an ATP binding site.

Belongs to the formate--tetrahydrofolate ligase family.

It carries out the reaction (6S)-5,6,7,8-tetrahydrofolate + formate + ATP = (6R)-10-formyltetrahydrofolate + ADP + phosphate. It functions in the pathway one-carbon metabolism; tetrahydrofolate interconversion. The polypeptide is Formate--tetrahydrofolate ligase (Methylorubrum extorquens (strain CM4 / NCIMB 13688) (Methylobacterium extorquens)).